The primary structure comprises 385 residues: Exopolygalacturonase rpg16 (385 aa).

The first 26 residues, 1–26, serve as a signal peptide directing secretion; sequence MVRFTSFTSPFSAILLLSFGINKVAT. N-linked (GlcNAc...) asparagine glycans are attached at residues Asn-143, Asn-161, Asn-164, and Asn-180. The stretch at 165–195 is one PbH1 1 repeat; that stretch reads STNLLLHDFIIHTVSNNSNPAKNTDALDLYH. The active-site Proton donor is the Asp-210. Cys-212 and Cys-229 form a disulfide bridge. 2 N-linked (GlcNAc...) asparagine glycosylation sites follow: Asn-218 and Asn-226. 3 PbH1 repeats span residues 219–241, 249–270, and 278–299; these read VTKV…GSLG, VTQV…RVKT, and VEDI…IITT. His-233 is an active-site residue. N-linked (GlcNAc...) asparagine glycans are attached at residues Asn-256, Asn-282, and Asn-343. An intrachain disulfide couples Cys-344 to Cys-350. The stretch at 350–376 is one PbH1 5 repeat; the sequence is CSDVTLTNINISKASNNTKNVCVNLKG. Residues Asn-359 and Asn-365 are each glycosylated (N-linked (GlcNAc...) asparagine).

Belongs to the glycosyl hydrolase 28 family. In terms of processing, N-glycosylated.

The protein resides in the secreted. It catalyses the reaction [(1-&gt;4)-alpha-D-galacturonosyl](n) + H2O = alpha-D-galacturonate + [(1-&gt;4)-alpha-D-galacturonosyl](n-1). Functionally, specific in hydrolyzing the terminal glycosidic bond of polygalacturonic acid and oligogalacturonates. This is Exopolygalacturonase rpg16 from Rhizopus delemar (strain RA 99-880 / ATCC MYA-4621 / FGSC 9543 / NRRL 43880) (Mucormycosis agent).